The primary structure comprises 362 residues: L-arginine:L-lysine amidinotransferase (362 aa).

Catalysis depends on residues Asp-195 and His-244. Cys-346 acts as the Amidino-cysteine intermediate in catalysis.

Belongs to the amidinotransferase family.

It carries out the reaction L-lysine + L-arginine = L-homoarginine + L-ornithine. It catalyses the reaction L-canavanine + L-ornithine = L-canaline + L-arginine + H(+). Functionally, involved in the biosynthesis of phaseolotoxin, a nonhost-specific toxin which is a key component in the development of the halo blight disease of beans. Catalyzes the transfer of an amidino group from arginine to lysine to produce one molecule of homoarginine and one molecule of ornithine, both being precursors in the biosynthesis of phaseolotoxin. Can also use L-canavanine as an alternative amidine donor with L-ornithine as amidine acceptor. The polypeptide is L-arginine:L-lysine amidinotransferase (Pseudomonas savastanoi pv. phaseolicola (Pseudomonas syringae pv. phaseolicola)).